The sequence spans 236 residues: 2-C-methyl-D-erythritol 4-phosphate cytidylyltransferase (236 aa).

It belongs to the IspD/TarI cytidylyltransferase family. IspD subfamily.

The catalysed reaction is 2-C-methyl-D-erythritol 4-phosphate + CTP + H(+) = 4-CDP-2-C-methyl-D-erythritol + diphosphate. It participates in isoprenoid biosynthesis; isopentenyl diphosphate biosynthesis via DXP pathway; isopentenyl diphosphate from 1-deoxy-D-xylulose 5-phosphate: step 2/6. Its function is as follows. Catalyzes the formation of 4-diphosphocytidyl-2-C-methyl-D-erythritol from CTP and 2-C-methyl-D-erythritol 4-phosphate (MEP). The sequence is that of 2-C-methyl-D-erythritol 4-phosphate cytidylyltransferase from Symbiobacterium thermophilum (strain DSM 24528 / JCM 14929 / IAM 14863 / T).